Here is a 397-residue protein sequence, read N- to C-terminus: 1-deoxy-D-xylulose 5-phosphate reductoisomerase (397 aa).

Thr10, Gly11, Ser12, Ile13, Gly36, Lys37, Asn38, and Asn124 together coordinate NADPH. Lys125 contacts 1-deoxy-D-xylulose 5-phosphate. Glu126 is a binding site for NADPH. A Mn(2+)-binding site is contributed by Asp150. 1-deoxy-D-xylulose 5-phosphate contacts are provided by Ser151, Glu152, Ser186, and His209. Residue Glu152 coordinates Mn(2+). Residue Gly215 coordinates NADPH. The 1-deoxy-D-xylulose 5-phosphate site is built by Ser222, Asn227, Lys228, and Glu231. Residue Glu231 coordinates Mn(2+).

It belongs to the DXR family. As to quaternary structure, homodimer. Requires Mg(2+) as cofactor. Mn(2+) is required as a cofactor.

It catalyses the reaction 2-C-methyl-D-erythritol 4-phosphate + NADP(+) = 1-deoxy-D-xylulose 5-phosphate + NADPH + H(+). The protein operates within isoprenoid biosynthesis; isopentenyl diphosphate biosynthesis via DXP pathway; isopentenyl diphosphate from 1-deoxy-D-xylulose 5-phosphate: step 1/6. Functionally, catalyzes the NADPH-dependent rearrangement and reduction of 1-deoxy-D-xylulose-5-phosphate (DXP) to 2-C-methyl-D-erythritol 4-phosphate (MEP). This chain is 1-deoxy-D-xylulose 5-phosphate reductoisomerase, found in Proteus mirabilis (strain HI4320).